A 188-amino-acid polypeptide reads, in one-letter code: dCTP deaminase (188 aa).

Residues lysine 111 to arginine 116, threonine 135 to glutamate 137, glutamine 156, tyrosine 170, and glutamine 180 contribute to the dCTP site. The Proton donor/acceptor role is filled by glutamate 137.

This sequence belongs to the dCTP deaminase family. In terms of assembly, homotrimer.

The catalysed reaction is dCTP + H2O + H(+) = dUTP + NH4(+). It participates in pyrimidine metabolism; dUMP biosynthesis; dUMP from dCTP (dUTP route): step 1/2. Its function is as follows. Catalyzes the deamination of dCTP to dUTP. In Cupriavidus metallidurans (strain ATCC 43123 / DSM 2839 / NBRC 102507 / CH34) (Ralstonia metallidurans), this protein is dCTP deaminase.